The following is a 636-amino-acid chain: uncharacterized protein (636 aa).

A DNA-binding region (zn(2)-C6 fungal-type) is located at residues 10-36 (CLACRRKKVKCNRQYPCTRCLKYGEAC). Residues 556–580 (NSQSTSEFVSPISDTENGSSSQQVS) are compositionally biased toward polar residues. Positions 556 to 581 (NSQSTSEFVSPISDTENGSSSQQVSE) are disordered.

It localises to the cytoplasm. Its subcellular location is the nucleus. This is an uncharacterized protein from Schizosaccharomyces pombe (strain 972 / ATCC 24843) (Fission yeast).